The sequence spans 261 residues: Thiazole synthase (261 aa).

The active-site Schiff-base intermediate with DXP is the K97. 1-deoxy-D-xylulose 5-phosphate contacts are provided by residues G158, 184 to 185 (AG), and 206 to 207 (AS).

The protein belongs to the ThiG family. In terms of assembly, homotetramer. Forms heterodimers with either ThiH or ThiS.

It localises to the cytoplasm. It catalyses the reaction [ThiS sulfur-carrier protein]-C-terminal-Gly-aminoethanethioate + 2-iminoacetate + 1-deoxy-D-xylulose 5-phosphate = [ThiS sulfur-carrier protein]-C-terminal Gly-Gly + 2-[(2R,5Z)-2-carboxy-4-methylthiazol-5(2H)-ylidene]ethyl phosphate + 2 H2O + H(+). It participates in cofactor biosynthesis; thiamine diphosphate biosynthesis. Its function is as follows. Catalyzes the rearrangement of 1-deoxy-D-xylulose 5-phosphate (DXP) to produce the thiazole phosphate moiety of thiamine. Sulfur is provided by the thiocarboxylate moiety of the carrier protein ThiS. In vitro, sulfur can be provided by H(2)S. The protein is Thiazole synthase of Corynebacterium diphtheriae (strain ATCC 700971 / NCTC 13129 / Biotype gravis).